The primary structure comprises 339 residues: tRNA dimethylallyltransferase (339 aa).

33–40 serves as a coordination point for ATP; sequence GPTASGKT. 35–40 lines the substrate pocket; it reads TASGKT. Interaction with substrate tRNA stretches follow at residues 58–61 and 182–186; these read DSLL and QRIQR.

This sequence belongs to the IPP transferase family. Monomer. Requires Mg(2+) as cofactor.

It catalyses the reaction adenosine(37) in tRNA + dimethylallyl diphosphate = N(6)-dimethylallyladenosine(37) in tRNA + diphosphate. Functionally, catalyzes the transfer of a dimethylallyl group onto the adenine at position 37 in tRNAs that read codons beginning with uridine, leading to the formation of N6-(dimethylallyl)adenosine (i(6)A). The protein is tRNA dimethylallyltransferase of Acidithiobacillus ferrooxidans (strain ATCC 23270 / DSM 14882 / CIP 104768 / NCIMB 8455) (Ferrobacillus ferrooxidans (strain ATCC 23270)).